Here is a 323-residue protein sequence, read N- to C-terminus: Lipoyl synthase (323 aa).

Positions 61, 66, 72, 87, 91, 94, and 303 each coordinate [4Fe-4S] cluster. The Radical SAM core domain occupies 73–292; it reads WTKKTATFLV…EQYGLSIGIP (220 aa).

The protein belongs to the radical SAM superfamily. Lipoyl synthase family. The cofactor is [4Fe-4S] cluster.

The protein localises to the cytoplasm. It carries out the reaction [[Fe-S] cluster scaffold protein carrying a second [4Fe-4S](2+) cluster] + N(6)-octanoyl-L-lysyl-[protein] + 2 oxidized [2Fe-2S]-[ferredoxin] + 2 S-adenosyl-L-methionine + 4 H(+) = [[Fe-S] cluster scaffold protein] + N(6)-[(R)-dihydrolipoyl]-L-lysyl-[protein] + 4 Fe(3+) + 2 hydrogen sulfide + 2 5'-deoxyadenosine + 2 L-methionine + 2 reduced [2Fe-2S]-[ferredoxin]. It functions in the pathway protein modification; protein lipoylation via endogenous pathway; protein N(6)-(lipoyl)lysine from octanoyl-[acyl-carrier-protein]: step 2/2. In terms of biological role, catalyzes the radical-mediated insertion of two sulfur atoms into the C-6 and C-8 positions of the octanoyl moiety bound to the lipoyl domains of lipoate-dependent enzymes, thereby converting the octanoylated domains into lipoylated derivatives. In Protochlamydia amoebophila (strain UWE25), this protein is Lipoyl synthase.